The primary structure comprises 498 residues: Glutamyl-tRNA(Gln) amidotransferase subunit A (498 aa).

Catalysis depends on charge relay system residues lysine 80 and serine 155. Residues 132-159 are disordered; that stretch reads SSTENSAYGPTRNPWDTDRVPGGSSGGS. The active-site Acyl-ester intermediate is serine 179.

This sequence belongs to the amidase family. GatA subfamily. In terms of assembly, heterotrimer of A, B and C subunits.

It catalyses the reaction L-glutamyl-tRNA(Gln) + L-glutamine + ATP + H2O = L-glutaminyl-tRNA(Gln) + L-glutamate + ADP + phosphate + H(+). Its function is as follows. Allows the formation of correctly charged Gln-tRNA(Gln) through the transamidation of misacylated Glu-tRNA(Gln) in organisms which lack glutaminyl-tRNA synthetase. The reaction takes place in the presence of glutamine and ATP through an activated gamma-phospho-Glu-tRNA(Gln). The protein is Glutamyl-tRNA(Gln) amidotransferase subunit A of Thermobifida fusca (strain YX).